A 140-amino-acid polypeptide reads, in one-letter code: Large ribosomal subunit protein uL13 (140 aa).

Belongs to the universal ribosomal protein uL13 family. In terms of assembly, part of the 50S ribosomal subunit.

This protein is one of the early assembly proteins of the 50S ribosomal subunit, although it is not seen to bind rRNA by itself. It is important during the early stages of 50S assembly. The protein is Large ribosomal subunit protein uL13 of Nautilia profundicola (strain ATCC BAA-1463 / DSM 18972 / AmH).